A 324-amino-acid chain; its full sequence is Myoblast determination protein 1 homolog (324 aa).

Residues 125-146 (VDSQHEDTTTSTAGGAGVGGPR) are disordered. The region spanning 155–206 (DRRKAATMRERRRLRKVNEAFEVVKQRTCPNPNQRLPKVEILRSAIDYINNL) is the bHLH domain. The tract at residues 251–272 (YNPENMFDDDDLTDSDDDRDHH) is disordered. The span at 256–267 (MFDDDDLTDSDD) shows a compositional bias: acidic residues.

In terms of assembly, efficient DNA binding requires dimerization with another bHLH protein. As to expression, body wall muscle cells; in clonal muscle precursors, in a set of early embryonic blastomeres (the ms-granddaughters), and in six glial-like cells called GLRS.

It localises to the nucleus. In terms of biological role, involved in myogenesis, in cooperation with transcription factors unc-120 and hnd-1. Acts redundantly with fozi-1 to promote body wall muscle cell and coelomocyte specification in postembryonic mesoderm progenitors, probably through suppression of sem-2. This is Myoblast determination protein 1 homolog from Caenorhabditis elegans.